The following is a 264-amino-acid chain: Synaptophysin-like protein 2 (264 aa).

The Cytoplasmic portion of the chain corresponds to 1 to 33 (MSSTESPGRTSDKSPRQQVDRLLLGLRWQRLEE). The 209-residue stretch at 30–238 (RLEEPLGFIK…NCWFVFKETP (209 aa)) folds into the MARVEL domain. Residues 34–54 (PLGFIKVLQWLFAIFAFGSCG) traverse the membrane as a helical segment. Topologically, residues 55–116 (SYSGETGALV…LMGDFSAPAE (62 aa)) are vesicular. Residues 117-137 (FFVTLGIFSFFYTMAALVIYL) traverse the membrane as a helical segment. Topologically, residues 138 to 150 (RFHKLYTENKRFP) are cytoplasmic. A helical membrane pass occupies residues 151 to 171 (LVDFCVTVSFTFFWLVAAAAW). At 172–213 (GKGLTDVKGATRPSSLTAAMSVCHGEEAVCSAGATPSMGLAN) the chain is on the vesicular side. N-linked (GlcNAc...) asparagine glycosylation occurs at Asn213. A helical transmembrane segment spans residues 214-234 (LSVLFGFINFFLWAGNCWFVF). Topologically, residues 235–264 (KETPWHGQGQDQGQGPSQESAAEQGAVEKQ) are cytoplasmic. The disordered stretch occupies residues 242–264 (QGQDQGQGPSQESAAEQGAVEKQ).

It belongs to the synaptophysin/synaptobrevin family. Expressed abundantly in skeletal muscle and at lower levels in the kidney.

The protein resides in the membrane. Involved in communication between the T-tubular and junctional sarcoplasmic reticulum (SR) membranes. This is Synaptophysin-like protein 2 (Sypl2) from Mus musculus (Mouse).